Here is a 514-residue protein sequence, read N- to C-terminus: Na(+)/H(+) antiporter NhaB (514 aa).

Helical transmembrane passes span 23–43, 63–83, 97–117, 120–140, 144–164, 202–222, 238–258, 303–323, 357–377, 391–411, 447–467, and 475–495; these read LALL…PFVA, PLLP…TSAA, LLLM…LFIF, LLLS…AAAF, FLDA…FYGI, LMMH…VGEP, FFLR…LTCM, AVIG…VGLI, LTVF…APII, LFYL…VGTI, ATPN…APLI, and VWMA…CVEF.

This sequence belongs to the NhaB Na(+)/H(+) (TC 2.A.34) antiporter family.

It is found in the cell inner membrane. It carries out the reaction 2 Na(+)(in) + 3 H(+)(out) = 2 Na(+)(out) + 3 H(+)(in). In terms of biological role, na(+)/H(+) antiporter that extrudes sodium in exchange for external protons. The chain is Na(+)/H(+) antiporter NhaB from Salmonella agona (strain SL483).